The primary structure comprises 309 residues: Taste receptor type 2 member 46 (309 aa).

Residue M1 is a topological domain, extracellular. The chain crosses the membrane as a helical span at residues I2–F22. At A23 to Q46 the chain is on the cytoplasmic side. The helical transmembrane segment at I47–Y67 threads the bilayer. Residues A68 to N86 lie on the Extracellular side of the membrane. Residues L87–L107 form a helical membrane-spanning segment. Residues L108–K126 lie on the Cytoplasmic side of the membrane. The helical transmembrane segment at S127 to I147 threads the bilayer. At N148–T178 the chain is on the extracellular side. Residues N161 and N176 are each glycosylated (N-linked (GlcNAc...) asparagine). A helical membrane pass occupies residues V179–I199. The Cytoplasmic portion of the chain corresponds to C200–Q229. A helical membrane pass occupies residues T230–W250. The Extracellular portion of the chain corresponds to S251–P259. The helical transmembrane segment at V260–I280 threads the bilayer. Over W281–P309 the chain is Cytoplasmic.

It belongs to the G-protein coupled receptor T2R family.

Its subcellular location is the membrane. It localises to the cell projection. The protein localises to the cilium membrane. Functionally, receptor that may play a role in the perception of bitterness and is gustducin-linked. May play a role in sensing the chemical composition of the gastrointestinal content. The activity of this receptor may stimulate alpha gustducin, mediate PLC-beta-2 activation and lead to the gating of TRPM5. In airway epithelial cells, binding of bitter compounds increases the intracellular calcium ion concentration and stimulates ciliary beat frequency. The polypeptide is Taste receptor type 2 member 46 (TAS2R46) (Pan paniscus (Pygmy chimpanzee)).